A 1851-amino-acid chain; its full sequence is Chitin synthase (1851 aa).

The interval 1–21 (MQYHQHQHQFPGPGPSHTSVY) is disordered. At 1–108 (MQYHQHQHQF…KDTLYNGFLQ (108 aa)) the chain is on the cytoplasmic side. Residues 109-129 (VLKMITFVALFVTTLGSSILA) form a helical membrane-spanning segment. The Extracellular segment spans residues 130–168 (KLSLLVMAAGLGQAGHNISICPDKIPESPKNSVLISPKN). N-linked (GlcNAc...) asparagine glycosylation is present at N146. A helical membrane pass occupies residues 169 to 189 (AAKWAWALLLAICIPELLCFA). The Cytoplasmic portion of the chain corresponds to 190-208 (RSLHRSLFRKVRGPSFLQF). Residues 209-229 (LLVFTVESVHAFGLGALVFAI) traverse the membrane as a helical segment. Over 230–234 (MPRGM) the chain is Extracellular. The chain crosses the membrane as a helical span at residues 235–255 (VITMLQLGNSLCLIPSLLLPL). The Cytoplasmic portion of the chain corresponds to 256 to 261 (SRSRSR). The chain crosses the membrane as a helical span at residues 262 to 282 (WLPLLLLLDGSAILAQSSAAI). Over 283–291 (WRGSIPLER) the chain is Extracellular. The chain crosses the membrane as a helical span at residues 292 to 312 (FGFVFLCTSLISIAWWQNFVH). Over 313 to 337 (PHSFLPATRFFAHYAAKLRECRSKT) the chain is Cytoplasmic. A helical membrane pass occupies residues 338–358 (FVVLSPWKCLIFTFCMFQFVP). At 359-544 (PQIPFRELLQ…ELNQFTTAND (186 aa)) the chain is on the extracellular side. N-linked (GlcNAc...) asparagine glycans are attached at residues N385 and N435. The segment at 432 to 522 (LFRNGTRRPP…DADEQEEEEE (91 aa)) is disordered. Residues 442–454 (KKEEVKKNKMDSK) are compositionally biased toward basic and acidic residues. Over residues 455 to 465 (KKTKKLKKKKG) the composition is skewed to basic residues. Low complexity predominate over residues 466-478 (GNNNATSTNSSEK). N469 and N474 each carry an N-linked (GlcNAc...) asparagine glycan. The span at 513-522 (DADEQEEEEE) shows a compositional bias: acidic residues. A helical membrane pass occupies residues 545–565 (ALWLVFVQAGSVLLCQLCAKF). Over 566-573 (ACKVVMQR) the chain is Cytoplasmic. Residues 574–594 (VGLALPVVLSIPFGILFLAYS) traverse the membrane as a helical segment. At 595–631 (CRQKATNPCHLSEWMSKELFWQCPTRPFHWQRFFREQ) the chain is on the extracellular side. A helical transmembrane segment spans residues 632 to 652 (PNLLWLCWWLSQCWITIHLWL). The Cytoplasmic segment spans residues 653 to 1124 (PRQERLAKSE…VSIWYIAYQL (472 aa)). A disordered region spans residues 693 to 718 (SEDIDTEEEANEGGGEQEDGNSSTHT). Residues 696 to 711 (IDTEEEANEGGGEQED) are compositionally biased toward acidic residues. Residues 1125–1145 (VMLFSSVLGPGTIFLMIVGAI) form a helical membrane-spanning segment. Residues 1146–1154 (SISFNIDTR) lie on the Extracellular side of the membrane. Residues 1155–1175 (LALLIVTTPVLCFCVCCLTCG) traverse the membrane as a helical segment. Residues 1176-1179 (TETQ) lie on the Cytoplasmic side of the membrane. The chain crosses the membrane as a helical span at residues 1180–1200 (LLLAQVIGALFAMLMTAVIVG). Over 1201 to 1209 (TSLQIQKDG) the chain is Extracellular. The chain crosses the membrane as a helical span at residues 1210 to 1230 (LLSPHSIFLFTVLGSWSFSAL). The Cytoplasmic portion of the chain corresponds to 1231–1235 (LHPLE). The chain crosses the membrane as a helical span at residues 1236-1256 (FGCLLPCGLYFLAIPCMYMLL). The Extracellular portion of the chain corresponds to 1257 to 1461 (PVYSLCNLNT…QRGLNELRNT (205 aa)). N1274 carries N-linked (GlcNAc...) asparagine glycosylation. A coiled-coil region spans residues 1329-1383 (CADETVEVRKLDENFRKIERKLQSLERRTNGQGNNAEEEGKEEEETGKSEQERKE). The disordered stretch occupies residues 1350 to 1402 (LQSLERRTNGQGNNAEEEGKEEEETGKSEQERKEGREEGKEEEGKMSKRKKEE). Positions 1364 to 1373 (AEEEGKEEEE) are enriched in acidic residues. The segment covering 1374–1402 (TGKSEQERKEGREEGKEEEGKMSKRKKEE) has biased composition (basic and acidic residues). A helical transmembrane segment spans residues 1462–1482 (CCSAFFMVNIVFIIVVLVLQL). Residues 1483 to 1527 (QKDCLHIEWPLGPLVNQTRVQCGGGGGRDFEGEEWIMSRLQLEPM) are Cytoplasmic-facing. A helical transmembrane segment spans residues 1528–1548 (GFVFIVFFLIILFIQFLAMLF). The Extracellular portion of the chain corresponds to 1549 to 1851 (HRFGTFTHII…FLGTTNKRAK (303 aa)). The segment at 1626 to 1658 (GKRQQNAQIPPRCEKGGNERGEESPTSLPAPPV) is disordered. Positions 1637–1648 (RCEKGGNERGEE) are enriched in basic and acidic residues. The N-linked (GlcNAc...) asparagine glycan is linked to N1660. Positions 1765–1851 (HSIFPSSSES…FLGTTNKRAK (87 aa)) are disordered. The span at 1781–1822 (GGGRGRGREQERDKCLEGKKEKFRQRVEEGPARCHRLEELFG) shows a compositional bias: basic and acidic residues. The span at 1823-1834 (KSRKGGPQKRGK) shows a compositional bias: basic residues.

It belongs to the chitin synthase family. Class IV subfamily. May require proteolytic cleavage for activation.

The protein resides in the cell membrane. It catalyses the reaction [(1-&gt;4)-N-acetyl-beta-D-glucosaminyl](n) + UDP-N-acetyl-alpha-D-glucosamine = [(1-&gt;4)-N-acetyl-beta-D-glucosaminyl](n+1) + UDP + H(+). Its function is as follows. Required for the synthesis of chitin. This Meloidogyne artiellia (British root-knot nematode) protein is Chitin synthase.